Here is a 439-residue protein sequence, read N- to C-terminus: sn-glycerol-3-phosphate-binding periplasmic protein UgpB (439 aa).

A signal peptide spans 1–25 (MFNNSIHKVSICIALTLTFSANAMA). 7 residues coordinate sn-glycerol 3-phosphate: tyrosine 67, glutamate 91, serine 146, serine 272, glycine 309, tyrosine 348, and arginine 399.

Belongs to the bacterial solute-binding protein 1 family. In terms of assembly, the complex is composed of two ATP-binding proteins (UgpC), two transmembrane proteins (UgpA and UgpE) and a solute-binding protein (UgpB).

The protein localises to the periplasm. In terms of biological role, part of the ABC transporter complex UgpBAEC involved in sn-glycerol-3-phosphate (G3P) import. Binds G3P. In Yersinia pseudotuberculosis serotype I (strain IP32953), this protein is sn-glycerol-3-phosphate-binding periplasmic protein UgpB (ugpB).